We begin with the raw amino-acid sequence, 330 residues long: GMP reductase (330 aa).

Residue C180 is the Thioimidate intermediate of the active site. NADP(+) is bound at residue 209-232 (LIADGGIRHNGDIAKSVRFGASMV).

This sequence belongs to the IMPDH/GMPR family. GuaC type 2 subfamily.

The catalysed reaction is IMP + NH4(+) + NADP(+) = GMP + NADPH + 2 H(+). Catalyzes the irreversible NADPH-dependent deamination of GMP to IMP. It functions in the conversion of nucleobase, nucleoside and nucleotide derivatives of G to A nucleotides, and in maintaining the intracellular balance of A and G nucleotides. The protein is GMP reductase of Lactobacillus johnsonii (strain CNCM I-12250 / La1 / NCC 533).